A 115-amino-acid polypeptide reads, in one-letter code: Large ribosomal subunit protein bL19 (115 aa).

The protein belongs to the bacterial ribosomal protein bL19 family.

In terms of biological role, this protein is located at the 30S-50S ribosomal subunit interface and may play a role in the structure and function of the aminoacyl-tRNA binding site. The sequence is that of Large ribosomal subunit protein bL19 from Syntrophotalea carbinolica (strain DSM 2380 / NBRC 103641 / GraBd1) (Pelobacter carbinolicus).